A 201-amino-acid polypeptide reads, in one-letter code: Small ribosomal subunit protein uS4 (201 aa).

An S4 RNA-binding domain is found at 91 to 157 (SRLDNVIYRA…VPFQIARETA (67 aa)).

It belongs to the universal ribosomal protein uS4 family. In terms of assembly, part of the 30S ribosomal subunit. Contacts protein S5. The interaction surface between S4 and S5 is involved in control of translational fidelity.

Functionally, one of the primary rRNA binding proteins, it binds directly to 16S rRNA where it nucleates assembly of the body of the 30S subunit. Its function is as follows. With S5 and S12 plays an important role in translational accuracy. This chain is Small ribosomal subunit protein uS4, found in Mycobacterium tuberculosis (strain ATCC 25177 / H37Ra).